The sequence spans 361 residues: Very-long-chain 3-oxoacyl-CoA reductase (361 aa).

Residues Pro-32–Phe-52 form a helical membrane-spanning segment. NADP(+)-binding residues include Val-79, Asp-133, Asn-163, Arg-198, Tyr-236, Lys-240, Val-269, and Ser-271. Tyr-236 functions as the Proton donor in the catalytic mechanism. Lys-240 serves as the catalytic Lowers pKa of active site Tyr.

The protein belongs to the short-chain dehydrogenases/reductases (SDR) family.

The protein resides in the endoplasmic reticulum membrane. The catalysed reaction is a very-long-chain (3R)-3-hydroxyacyl-CoA + NADP(+) = a very-long-chain 3-oxoacyl-CoA + NADPH + H(+). Its pathway is lipid metabolism; fatty acid biosynthesis. Functionally, component of the microsomal membrane bound fatty acid elongation system, which produces the 26-carbon very long-chain fatty acids (VLCFA) from palmitate. Catalyzes the reduction of the 3-ketoacyl-CoA intermediate that is formed in each cycle of fatty acid elongation. VLCFAs serve as precursors for ceramide and sphingolipids. The polypeptide is Very-long-chain 3-oxoacyl-CoA reductase (Cryptococcus neoformans var. neoformans serotype D (strain B-3501A) (Filobasidiella neoformans)).